A 427-amino-acid polypeptide reads, in one-letter code: Gamma-glutamyl phosphate reductase (427 aa).

It belongs to the gamma-glutamyl phosphate reductase family.

Its subcellular location is the cytoplasm. It carries out the reaction L-glutamate 5-semialdehyde + phosphate + NADP(+) = L-glutamyl 5-phosphate + NADPH + H(+). It functions in the pathway amino-acid biosynthesis; L-proline biosynthesis; L-glutamate 5-semialdehyde from L-glutamate: step 2/2. Its function is as follows. Catalyzes the NADPH-dependent reduction of L-glutamate 5-phosphate into L-glutamate 5-semialdehyde and phosphate. The product spontaneously undergoes cyclization to form 1-pyrroline-5-carboxylate. The chain is Gamma-glutamyl phosphate reductase from Brucella ovis (strain ATCC 25840 / 63/290 / NCTC 10512).